The sequence spans 179 residues: Large ribosomal subunit protein uL16 (179 aa).

The segment at 147–179 (KASSASLANLDEDANSQTDDETSSSGSVATVES) is disordered. The segment covering 156-168 (LDEDANSQTDDET) has biased composition (acidic residues). The span at 169 to 179 (SSSGSVATVES) shows a compositional bias: polar residues.

The protein belongs to the universal ribosomal protein uL16 family. As to quaternary structure, part of the 50S ribosomal subunit.

Its function is as follows. Binds 23S rRNA and is also seen to make contacts with the A and possibly P site tRNAs. The polypeptide is Large ribosomal subunit protein uL16 (Prochlorococcus marinus (strain MIT 9211)).